We begin with the raw amino-acid sequence, 301 residues long: Cytidine deaminase 1 (301 aa).

CMP/dCMP-type deaminase domains follow at residues 23–156 and 188–301; these read SVIQ…FGPD and DSSA…CYEA. 64-66 serves as a coordination point for substrate; the sequence is NVE. H77 is a Zn(2+) binding site. The Proton donor role is filled by E79. The Zn(2+) site is built by C104 and C107.

Belongs to the cytidine and deoxycytidylate deaminase family. As to quaternary structure, homodimer. Zn(2+) is required as a cofactor. Expressed in roots, rosette leaves, stems and flowers.

It catalyses the reaction cytidine + H2O + H(+) = uridine + NH4(+). It carries out the reaction 2'-deoxycytidine + H2O + H(+) = 2'-deoxyuridine + NH4(+). With respect to regulation, inhibited by uridine, CMP and dCMP. In terms of biological role, this enzyme scavenges exogenous and endogenous cytidine and 2'-deoxycytidine for UMP synthesis. Functions as a conventional cytidine deaminase. Has no affinity for RNA and is not involved in RNA-editing by C-to-U deamination. This is Cytidine deaminase 1 (CDA1) from Arabidopsis thaliana (Mouse-ear cress).